A 220-amino-acid chain; its full sequence is Ribosomal RNA small subunit methyltransferase G (220 aa).

Residues G82, L87, 137 to 138 (VE), and R152 contribute to the S-adenosyl-L-methionine site.

This sequence belongs to the methyltransferase superfamily. RNA methyltransferase RsmG family.

The protein localises to the cytoplasm. It carries out the reaction guanosine(527) in 16S rRNA + S-adenosyl-L-methionine = N(7)-methylguanosine(527) in 16S rRNA + S-adenosyl-L-homocysteine. Functionally, specifically methylates the N7 position of guanine in position 527 of 16S rRNA. The polypeptide is Ribosomal RNA small subunit methyltransferase G (Janthinobacterium sp. (strain Marseille) (Minibacterium massiliensis)).